The following is a 208-amino-acid chain: Small ribosomal subunit protein uS4 (208 aa).

One can recognise an S4 RNA-binding domain in the interval 98–161 (RRLDNVVYRL…RKIPVLAEAQ (64 aa)).

Belongs to the universal ribosomal protein uS4 family. In terms of assembly, part of the 30S ribosomal subunit. Contacts protein S5. The interaction surface between S4 and S5 is involved in control of translational fidelity.

Functionally, one of the primary rRNA binding proteins, it binds directly to 16S rRNA where it nucleates assembly of the body of the 30S subunit. With S5 and S12 plays an important role in translational accuracy. The chain is Small ribosomal subunit protein uS4 from Desulfovibrio desulfuricans (strain ATCC 27774 / DSM 6949 / MB).